The primary structure comprises 223 residues: Leucyl/phenylalanyl-tRNA--protein transferase (223 aa).

Belongs to the L/F-transferase family.

The protein resides in the cytoplasm. The catalysed reaction is N-terminal L-lysyl-[protein] + L-leucyl-tRNA(Leu) = N-terminal L-leucyl-L-lysyl-[protein] + tRNA(Leu) + H(+). The enzyme catalyses N-terminal L-arginyl-[protein] + L-leucyl-tRNA(Leu) = N-terminal L-leucyl-L-arginyl-[protein] + tRNA(Leu) + H(+). It carries out the reaction L-phenylalanyl-tRNA(Phe) + an N-terminal L-alpha-aminoacyl-[protein] = an N-terminal L-phenylalanyl-L-alpha-aminoacyl-[protein] + tRNA(Phe). Functions in the N-end rule pathway of protein degradation where it conjugates Leu, Phe and, less efficiently, Met from aminoacyl-tRNAs to the N-termini of proteins containing an N-terminal arginine or lysine. This chain is Leucyl/phenylalanyl-tRNA--protein transferase, found in Dinoroseobacter shibae (strain DSM 16493 / NCIMB 14021 / DFL 12).